The sequence spans 356 residues: Tyrosine recombinase XerS (356 aa).

Residues valine 16–threonine 121 form the Core-binding (CB) domain. In terms of domain architecture, Tyr recombinase spans glycine 169–aspartate 354. Catalysis depends on residues arginine 210, lysine 234, histidine 306, arginine 309, and histidine 332. The active-site O-(3'-phospho-DNA)-tyrosine intermediate is tyrosine 341.

It belongs to the 'phage' integrase family. XerS subfamily.

It is found in the cytoplasm. Its activity is regulated as follows. FtsK is required for recombination. Site-specific tyrosine recombinase, which acts by catalyzing the cutting and rejoining of the recombining DNA molecules. Essential to convert dimers of the bacterial chromosome into monomers to permit their segregation at cell division. Binds an atypical recombination dif site (difSL). Binds preferentially to the left arm and cooperatively to the right arm of difSL. In Lactococcus lactis subsp. cremoris (strain MG1363), this protein is Tyrosine recombinase XerS.